The following is a 340-amino-acid chain: DNA-directed RNA polymerase subunit alpha (340 aa).

The tract at residues 1-236 (MLSLSKNWNT…EQLQLFISFE (236 aa)) is alpha N-terminal domain (alpha-NTD). Residues 251–340 (FSPYLLKRVD…LSKRYEDSYN (90 aa)) form an alpha C-terminal domain (alpha-CTD) region.

This sequence belongs to the RNA polymerase alpha chain family. As to quaternary structure, homodimer. The RNAP catalytic core consists of 2 alpha, 1 beta, 1 beta' and 1 omega subunit. When a sigma factor is associated with the core the holoenzyme is formed, which can initiate transcription.

It catalyses the reaction RNA(n) + a ribonucleoside 5'-triphosphate = RNA(n+1) + diphosphate. Its function is as follows. DNA-dependent RNA polymerase catalyzes the transcription of DNA into RNA using the four ribonucleoside triphosphates as substrates. The protein is DNA-directed RNA polymerase subunit alpha of Rickettsia rickettsii (strain Iowa).